A 284-amino-acid polypeptide reads, in one-letter code: Bifunctional protein FolD (284 aa).

NADP(+) is bound by residues 165-167 (GRS), Ser190, and Val231.

This sequence belongs to the tetrahydrofolate dehydrogenase/cyclohydrolase family. Homodimer.

It catalyses the reaction (6R)-5,10-methylene-5,6,7,8-tetrahydrofolate + NADP(+) = (6R)-5,10-methenyltetrahydrofolate + NADPH. The catalysed reaction is (6R)-5,10-methenyltetrahydrofolate + H2O = (6R)-10-formyltetrahydrofolate + H(+). It functions in the pathway one-carbon metabolism; tetrahydrofolate interconversion. Catalyzes the oxidation of 5,10-methylenetetrahydrofolate to 5,10-methenyltetrahydrofolate and then the hydrolysis of 5,10-methenyltetrahydrofolate to 10-formyltetrahydrofolate. The polypeptide is Bifunctional protein FolD (Brevibacillus brevis (strain 47 / JCM 6285 / NBRC 100599)).